The primary structure comprises 322 residues: Ribosomal RNA large subunit methyltransferase F (322 aa).

This sequence belongs to the methyltransferase superfamily. METTL16/RlmF family.

Its subcellular location is the cytoplasm. It carries out the reaction adenosine(1618) in 23S rRNA + S-adenosyl-L-methionine = N(6)-methyladenosine(1618) in 23S rRNA + S-adenosyl-L-homocysteine + H(+). Its function is as follows. Specifically methylates the adenine in position 1618 of 23S rRNA. The sequence is that of Ribosomal RNA large subunit methyltransferase F from Cytophaga hutchinsonii (strain ATCC 33406 / DSM 1761 / CIP 103989 / NBRC 15051 / NCIMB 9469 / D465).